The chain runs to 1579 residues: tRNA (guanosine(18)-2'-O)-methyltransferase TARBP1 (1579 aa).

The residue at position 1 (methionine 1) is an N-acetylmethionine. S-adenosyl-L-homocysteine is bound by residues valine 1501, glycine 1524, isoleucine 1544, glutamine 1546, and leucine 1553.

Belongs to the class IV-like SAM-binding methyltransferase superfamily. RNA methyltransferase TrmH family. Monomer and homodimer.

It catalyses the reaction guanosine(18) in tRNA + S-adenosyl-L-methionine = 2'-O-methylguanosine(18) in tRNA + S-adenosyl-L-homocysteine + H(+). Its function is as follows. S-adenosyl-L-methionine-dependent 2'-O-ribose methyltransferase that catalyzes the formation of 2'-O-methylguanosine at position 18 (Gm18) in a subset of tRNA. Selectively mediates Gm18 methylation of tRNAGln-TTG/CTG and tRNASer-TGA/GCT. Gm18 modification can enhance the stability of modified tRNAs. The sequence is that of tRNA (guanosine(18)-2'-O)-methyltransferase TARBP1 from Mus musculus (Mouse).